Consider the following 118-residue polypeptide: Co-chaperonin GroES (118 aa).

It belongs to the GroES chaperonin family. In terms of assembly, heptamer of 7 subunits arranged in a ring. Interacts with the chaperonin GroEL.

It localises to the cytoplasm. In terms of biological role, together with the chaperonin GroEL, plays an essential role in assisting protein folding. The GroEL-GroES system forms a nano-cage that allows encapsulation of the non-native substrate proteins and provides a physical environment optimized to promote and accelerate protein folding. GroES binds to the apical surface of the GroEL ring, thereby capping the opening of the GroEL channel. The protein is Co-chaperonin GroES of Helicobacter pylori (strain HPAG1).